We begin with the raw amino-acid sequence, 142 residues long: Baculoviral IAP repeat-containing protein 5 (142 aa).

Residues 18–88 (RISTFKNWPF…KHSSGCAFLS (71 aa)) form a BIR repeat. Ser-20 carries the post-translational modification Phosphoserine; by AURKC. Lys-23 carries the post-translational modification N6-acetyllysine. Thr-34 is modified (phosphothreonine; by CDK1 and CDK15). Thr-48 bears the Phosphothreonine mark. Zn(2+) contacts are provided by Cys-57, Cys-60, His-77, and Cys-84. N6-acetyllysine is present on residues Lys-90, Lys-110, Lys-112, and Lys-115. Thr-117 is subject to Phosphothreonine; by AURKB. Position 129 is an N6-acetyllysine (Lys-129).

Belongs to the IAP family. Monomer or homodimer. Exists as a homodimer in the apo state and as a monomer in the CPC-bound state. The monomer protects cells against apoptosis more efficiently than the dimer. Only the dimeric form is capable of enhancing tubulin stability in cells. When phosphorylated, interacts with LAMTOR5/HBXIP; the resulting complex binds pro-CASP9, as well as active CASP9, but much less efficiently. Component of the chromosomal passenger complex (CPC) composed of at least BIRC5/survivin, CDCA8/borealin, INCENP, AURKB or AURKC; in the complex forms a triple-helix bundle-based subcomplex with INCENP and CDCA8. Interacts with JTB. Interacts (via BIR domain) with histone H3 phosphorylated at 'Thr-3' (H3pT3). Interacts with EVI5. Interacts with GTP-bound RAN in both the S and M phases of the cell cycle. Interacts with USP9X. Interacts with tubulin. Interacts with BIRC2/c-IAP1. The acetylated form at Lys-129 interacts with STAT3. The monomeric form deacetylated at Lys-129 interacts with XPO1/CRM1. The monomeric form interacts with XIAP/BIRC4. Both the dimeric and monomeric form can interact with DIABLO/SMAC. Interacts with BIRC6/bruce. Interacts with FBXL7; this interaction facilitates the polyubiquitination and subsequent proteasomal degradation of BIRC5 by the SCF(FBXL7) E3 ubiquitin-protein ligase complex. Ubiquitinated by the Cul9-RING ubiquitin-protein ligase complex, leading to its degradation. Ubiquitination is required for centrosomal targeting. Deubiquitinated by USP35 or USP38; leading to stabilization. Post-translationally, acetylation at Lys-129 results in its homodimerization, while deacetylation promotes the formation of monomers which heterodimerize with XPO1/CRM1 which facilitates its nuclear export. The acetylated form represses STAT3 transactivation. The dynamic equilibrium between its acetylation and deacetylation at Lys-129 determines its interaction with XPO1/CRM1, its subsequent subcellular localization, and its ability to inhibit STAT3 transactivation. In terms of processing, in vitro phosphorylation at Thr-117 by AURKB prevents interaction with INCENP and localization to mitotic chromosomes. Phosphorylation at Thr-48 by CK2 is critical for its mitotic and anti-apoptotic activities. Phosphorylation at Thr-34 by CDK15 is critical for its anti-apoptotic activity. Phosphorylation at Ser-20 by AURKC is critical for regulation of proper chromosome alignment and segregation, and possibly cytokinesis.

It is found in the cytoplasm. It localises to the nucleus. Its subcellular location is the chromosome. The protein resides in the centromere. The protein localises to the cytoskeleton. It is found in the spindle. It localises to the kinetochore. Its subcellular location is the midbody. Its function is as follows. Multitasking protein that has dual roles in promoting cell proliferation and preventing apoptosis. Component of a chromosome passage protein complex (CPC) which is essential for chromosome alignment and segregation during mitosis and cytokinesis. Acts as an important regulator of the localization of this complex; directs CPC movement to different locations from the inner centromere during prometaphase to midbody during cytokinesis and participates in the organization of the center spindle by associating with polymerized microtubules. Involved in the recruitment of CPC to centromeres during early mitosis via association with histone H3 phosphorylated at 'Thr-3' (H3pT3) during mitosis. The complex with RAN plays a role in mitotic spindle formation by serving as a physical scaffold to help deliver the RAN effector molecule TPX2 to microtubules. May counteract a default induction of apoptosis in G2/M phase. The acetylated form represses STAT3 transactivation of target gene promoters. May play a role in neoplasia. Inhibitor of CASP3 and CASP7. Essential for the maintenance of mitochondrial integrity and function. The protein is Baculoviral IAP repeat-containing protein 5 (BIRC5) of Pongo abelii (Sumatran orangutan).